The chain runs to 139 residues: Antitoxin HicB 2 (139 aa).

Residues 87–137 form the HTH cro/C1-type domain; sequence MLQTRTSNAELARLLGTRPQEIQRIVSLSHSTKIDTIANALNALGKHLELV. Positions 96–113 form a DNA-binding region, H-T-H motif; sequence ELARLLGTRPQEIQRIVS.

This sequence belongs to the HicB antitoxin family. Probably forms a complex with the probable mRNA interferase HicA2 (its cognate toxin); when complexed with HicA inhibits the toxin activity.

Its function is as follows. Antitoxin component of a type II toxin-antitoxin (TA) system. Functions as an mRNA interferase antitoxin preventing effects of the HicA 2 toxin. The sequence is that of Antitoxin HicB 2 (hicB2) from Photorhabdus laumondii subsp. laumondii (strain DSM 15139 / CIP 105565 / TT01) (Photorhabdus luminescens subsp. laumondii).